Consider the following 217-residue polypeptide: Adenylate kinase (217 aa).

An ATP-binding site is contributed by 10–15 (GIGKGT). An NMP region spans residues 30 to 59 (ATGDIFRKNFKENTELGILIKKIIAQGLLV). Residues Thr-31, Arg-36, 57 to 59 (LLV), 85 to 88 (GFPR), and Gln-92 each bind AMP. An LID region spans residues 126–163 (GRRICPECGKVYHIENIPPKTPGICDKDQKTLIQREDD). Arg-127 contacts ATP. Zn(2+)-binding residues include Cys-130 and Cys-133. ATP is bound at residue 136-137 (VY). Positions 150 and 153 each coordinate Zn(2+). AMP contacts are provided by Arg-160 and Arg-171. Gln-199 is a binding site for ATP.

It belongs to the adenylate kinase family. Monomer.

It is found in the cytoplasm. It carries out the reaction AMP + ATP = 2 ADP. The protein operates within purine metabolism; AMP biosynthesis via salvage pathway; AMP from ADP: step 1/1. Its function is as follows. Catalyzes the reversible transfer of the terminal phosphate group between ATP and AMP. Plays an important role in cellular energy homeostasis and in adenine nucleotide metabolism. This chain is Adenylate kinase, found in Onion yellows phytoplasma (strain OY-M).